We begin with the raw amino-acid sequence, 354 residues long: MEKFKAAMLLGSVGDALGYRNVCKENSTVGMKIQEELQRSGGLDHLVLSPGEWPVSDNTIMHIATAEALTTDYWCLDDLYREMVRCYVEIVEKLPERRPDPATIEGCAQLKPNNYLLAWHTPFNEKGSGFGAATKAMCIGLRYWKPERLETLIEVSVECGRMTHNHPTGFLGSLCTALFVSFAAQGKPLVQWGRDMLRAVPLAEEYCKKTIRHTAEYQEHWFYFEAKWQFYLEERKISKDSENKAIFPDNYDAEEREKTYRKWSSEGRGGRRGHDAPMIAYDALLAAGNSWTELCHRAMFHGGESAATGTIAGCLFGLLYGLDLVPKGLHQDLEDKEKLEDLGAALYCLSTEEK.

Position 27 is a phosphoserine (Ser-27).

This sequence belongs to the ADP-ribosylglycohydrolase family.

It is found in the cytoplasm. The protein localises to the myofibril. The protein resides in the sarcomere. Required for myofibril assembly and outgrowth of the cardiac chambers in the developing heart. Appears to be catalytically inactive, showing no activity against O-acetyl-ADP-ribose. This is Inactive ADP-ribosyltransferase ARH2 (ADPRHL1) from Pongo abelii (Sumatran orangutan).